A 358-amino-acid polypeptide reads, in one-letter code: UDP-N-acetylglucosamine--N-acetylmuramyl-(pentapeptide) pyrophosphoryl-undecaprenol N-acetylglucosamine transferase (358 aa).

UDP-N-acetyl-alpha-D-glucosamine-binding positions include 11–13 (TGG), asparagine 120, arginine 161, serine 188, and glutamine 282.

It belongs to the glycosyltransferase 28 family. MurG subfamily.

Its subcellular location is the cell inner membrane. The catalysed reaction is di-trans,octa-cis-undecaprenyl diphospho-N-acetyl-alpha-D-muramoyl-L-alanyl-D-glutamyl-meso-2,6-diaminopimeloyl-D-alanyl-D-alanine + UDP-N-acetyl-alpha-D-glucosamine = di-trans,octa-cis-undecaprenyl diphospho-[N-acetyl-alpha-D-glucosaminyl-(1-&gt;4)]-N-acetyl-alpha-D-muramoyl-L-alanyl-D-glutamyl-meso-2,6-diaminopimeloyl-D-alanyl-D-alanine + UDP + H(+). Its pathway is cell wall biogenesis; peptidoglycan biosynthesis. Cell wall formation. Catalyzes the transfer of a GlcNAc subunit on undecaprenyl-pyrophosphoryl-MurNAc-pentapeptide (lipid intermediate I) to form undecaprenyl-pyrophosphoryl-MurNAc-(pentapeptide)GlcNAc (lipid intermediate II). In Synechococcus sp. (strain CC9605), this protein is UDP-N-acetylglucosamine--N-acetylmuramyl-(pentapeptide) pyrophosphoryl-undecaprenol N-acetylglucosamine transferase.